A 575-amino-acid chain; its full sequence is NEDD4-binding protein 2-like 2 (575 aa).

Basic and acidic residues-rich tracts occupy residues 69 to 87, 129 to 142, and 149 to 167; these read QEDK…EMPG, PPEK…KSET, and DSKR…KLEM. Disordered stretches follow at residues 69–169 and 555–575; these read QEDK…EMDT and GEQR…ADDY. A coiled-coil region spans residues 162–194; that stretch reads SKKLEMDTELSQFYKEIEELENENEASQGSCTE. The span at 564–575 shows a compositional bias: polar residues; it reads GSHSQVSIADDY.

This Mus musculus (Mouse) protein is NEDD4-binding protein 2-like 2 (N4bp2l2).